The primary structure comprises 78 residues: uncharacterized protein (78 aa).

The next 2 membrane-spanning stretches (helical) occupy residues 25–45 and 50–70; these read IITA…DEVV and KCAD…FVFV.

It localises to the membrane. This is an uncharacterized protein from Saccharomyces cerevisiae (strain ATCC 204508 / S288c) (Baker's yeast).